Reading from the N-terminus, the 119-residue chain is NAD(P)H-quinone oxidoreductase subunit M (119 aa).

The protein belongs to the complex I NdhM subunit family. NDH-1 can be composed of about 15 different subunits; different subcomplexes with different compositions have been identified which probably have different functions.

The protein resides in the cell inner membrane. The catalysed reaction is a plastoquinone + NADH + (n+1) H(+)(in) = a plastoquinol + NAD(+) + n H(+)(out). The enzyme catalyses a plastoquinone + NADPH + (n+1) H(+)(in) = a plastoquinol + NADP(+) + n H(+)(out). Functionally, NDH-1 shuttles electrons from an unknown electron donor, via FMN and iron-sulfur (Fe-S) centers, to quinones in the respiratory and/or the photosynthetic chain. The immediate electron acceptor for the enzyme in this species is believed to be plastoquinone. Couples the redox reaction to proton translocation, and thus conserves the redox energy in a proton gradient. Cyanobacterial NDH-1 also plays a role in inorganic carbon-concentration. This chain is NAD(P)H-quinone oxidoreductase subunit M, found in Gloeobacter violaceus (strain ATCC 29082 / PCC 7421).